The sequence spans 221 residues: MQSQLSLMGKKEGMIHVFDKDGNLVACSVISMSSNVVTQIKVDSTDGYNAIQMGANEINVPEKTLHKRVNKPSIGHFKKSGSRVFRELKEVRLSEEAVNEVSLGSEFGLEVFESVSSIDVSGVSKGKGFQGVMKRFGFRGGPQSHGSGFHRHAGSIGMRSTPGRCFPGSKRPSHMGTVNVTVKNLEVIKIDLEKKVLLVKGAIPGPRGSVVVVRRSSRAKG.

It belongs to the universal ribosomal protein uL3 family. As to quaternary structure, part of the 50S ribosomal subunit. Forms a cluster with proteins L14 and L19.

Functionally, one of the primary rRNA binding proteins, it binds directly near the 3'-end of the 23S rRNA, where it nucleates assembly of the 50S subunit. The polypeptide is Large ribosomal subunit protein uL3 (Chlamydia abortus (strain DSM 27085 / S26/3) (Chlamydophila abortus)).